A 198-amino-acid polypeptide reads, in one-letter code: Glycerol-3-phosphate acyltransferase (198 aa).

5 helical membrane-spanning segments follow: residues 1–21, 52–72, 81–101, 115–135, and 153–173; these read MILITSLAVLVSYLIGSIPAA, GPALLVAAFDILKGAIAVGLA, WTALCGVAAVLGHNFSPFLGF, LALDPVVGGGAFVVGVGCIWL, and LAAALARPGWLLLIVAFLAAL.

Belongs to the PlsY family. In terms of assembly, probably interacts with PlsX.

Its subcellular location is the cell membrane. The enzyme catalyses an acyl phosphate + sn-glycerol 3-phosphate = a 1-acyl-sn-glycero-3-phosphate + phosphate. It functions in the pathway lipid metabolism; phospholipid metabolism. Catalyzes the transfer of an acyl group from acyl-phosphate (acyl-PO(4)) to glycerol-3-phosphate (G3P) to form lysophosphatidic acid (LPA). This enzyme utilizes acyl-phosphate as fatty acyl donor, but not acyl-CoA or acyl-ACP. This chain is Glycerol-3-phosphate acyltransferase, found in Deinococcus geothermalis (strain DSM 11300 / CIP 105573 / AG-3a).